The following is a 248-amino-acid chain: Triosephosphate isomerase (248 aa).

The substrate site is built by Asn10 and Lys12. The active-site Electrophile is His95. Glu165 (proton acceptor) is an active-site residue.

It belongs to the triosephosphate isomerase family. Homodimer.

It carries out the reaction D-glyceraldehyde 3-phosphate = dihydroxyacetone phosphate. Its pathway is carbohydrate biosynthesis; gluconeogenesis. It participates in carbohydrate degradation; glycolysis; D-glyceraldehyde 3-phosphate from glycerone phosphate: step 1/1. This chain is Triosephosphate isomerase (TPI1), found in Kluyveromyces marxianus (Yeast).